A 1135-amino-acid polypeptide reads, in one-letter code: DNA-directed RNA polymerase I subunit RPA2 (1135 aa).

Residues 1-26 (MDVDGRWRNLPSGPSLKHLTDPSYGI) form a disordered region. Residue R180 participates in RNA binding. The interval 194 to 208 (VRPKWKSRGLGYTQF) is loop B. Residues 236-247 (LNFIYRKELFFL) are loop A. Position 367 (D367) interacts with RNA. Fork loop regions lie at residues 439–453 (LRSK…DSGL) and 474–489 (RGAA…VRRL). Position 755 (D755) interacts with Mg(2+). K890 serves as a coordination point for RNA. K1020 and R1036 together coordinate DNA. S1051 is subject to Phosphoserine. Residues C1070, C1073, C1098, and C1101 each coordinate Zn(2+). The C4-type zinc-finger motif lies at 1070–1101 (CVECGSLLSPLLEKPPPSWSAMRNRKYNCTVC).

The protein belongs to the RNA polymerase beta chain family. As to quaternary structure, component of the RNA polymerase I (Pol I) complex consisting of 13 subunits: a ten-subunit catalytic core composed of POLR1A/RPA1, POLR1B/RPA2, POLR1C/RPAC1, POLR1D/RPAC2, POLR1H/RPA12, POLR2E/RPABC1, POLR2F/RPABC2, POLR2H/RPABC3, POLR2K/RPABC4 and POLR2L/RPABC5; a mobile stalk subunit POLR1F/RPA43 protruding from the core and additional subunits homologous to general transcription factors POLR1E/RPA49 and POLR1G/RPA34. Part of Pol I pre-initiation complex (PIC), in which Pol I core assembles with RRN3 and promoter-bound UTBF and SL1/TIF-IB complex. The cofactor is Mg(2+).

The protein localises to the nucleus. It localises to the nucleolus. Its subcellular location is the chromosome. The enzyme catalyses RNA(n) + a ribonucleoside 5'-triphosphate = RNA(n+1) + diphosphate. Functionally, catalytic core component of RNA polymerase I (Pol I), a DNA-dependent RNA polymerase which synthesizes ribosomal RNA precursors using the four ribonucleoside triphosphates as substrates. Transcribes 47S pre-rRNAs from multicopy rRNA gene clusters, giving rise to 5.8S, 18S and 28S ribosomal RNAs. Pol I-mediated transcription cycle proceeds through transcription initiation, transcription elongation and transcription termination stages. During transcription initiation, Pol I pre-initiation complex (PIC) is recruited by the selectivity factor 1 (SL1/TIF-IB) complex bound to the core promoter that precedes an rDNA repeat unit. The PIC assembly bends the promoter favoring the formation of the transcription bubble and promoter escape. Once the polymerase has escaped from the promoter it enters the elongation phase during which RNA is actively polymerized, based on complementarity with the template DNA strand. Highly processive, assembles in structures referred to as 'Miller trees' where many elongating Pol I complexes queue and transcribe the same rDNA coding regions. At terminator sequences downstream of the rDNA gene, PTRF interacts with Pol I and halts Pol I transcription leading to the release of the RNA transcript and polymerase from the DNA. Forms Pol I active center together with the largest subunit POLR1A/RPA1. Appends one nucleotide at a time to the 3' end of the nascent RNA, with POLR1A/RPA1 contributing a Mg(2+)-coordinating DxDGD motif, and POLR1B/RPA2 participating in the coordination of a second Mg(2+) ion and providing lysine residues believed to facilitate Watson-Crick base pairing between the incoming nucleotide and the template base. Typically, Mg(2+) ions direct a 5' nucleoside triphosphate to form a phosphodiester bond with the 3' hydroxyl of the preceding nucleotide of the nascent RNA, with the elimination of pyrophosphate. Has proofreading activity: Pauses and backtracks to allow the cleavage of a missincorporated nucleotide via POLR1H/RPA12. High Pol I processivity is associated with decreased transcription fidelity. This is DNA-directed RNA polymerase I subunit RPA2 from Mus musculus (Mouse).